A 518-amino-acid polypeptide reads, in one-letter code: MPNIDLPTLEAFVHAIPQNYKGPGGAVAVVRNGEIVLRHAWGFADLAARKAMTPETRMPICSVSKQFTCAVLLDCIGEPEMLDSALAAYLDQFEDGRPAVRDLCNNQSGLRDYWALTVLCGAAPEGIFLPDQAQNLLRRLKTTHFAPGTHYSYCNGNFRILADLIEQHTGRSLADLLAERIFAPAAMKTAELIPDTALFNECTGYEGDTVRGFLPAINRIHWLGDAGICASLDDMIAWEQFIDRTRHDENGLYRRLSSPQTFADGAPAPYGFGLKFEETGGKRLTGHGGALRGWRCQRWHCADERISTIVMFNFEGNASDAALKMMNAALGIPPAKPVRAQANPGWFGSWLNPETGLVLSLEDAGGGRMKARFGTGPEKMDISGENEAQSSMTTLRRDGDMIHLARKDENLHLAMHRLKGEARQDIAGRYRSDELEADLLLVSEGGAIYGAFEGFLGKSDMYPLYAAGPDVWLLPVQRSMDAPSPGEWKLVFHRDAAGRITGVTVGCWLARGVEYKRL.

Ser62 acts as the Nucleophile in catalysis. Lys65 functions as the Proton donor/acceptor in the catalytic mechanism. The tract at residues 373 to 392 is disordered; that stretch reads FGTGPEKMDISGENEAQSSM. The segment at 477–487 is important for specificity; that stretch reads QRSMDAPSPGE. Asp481 is a binding site for substrate.

This sequence belongs to the peptidase S12 family. In terms of assembly, homodimer.

It carries out the reaction Release of an N-terminal D-amino acid from a peptide, Xaa-|-Yaa-, in which Xaa is preferably D-Ala, D-Ser or D-Thr. D-amino acid amides and methyl esters also are hydrolyzed, as is glycine amide.. Its activity is regulated as follows. Inhibited by beta-lactam compounds such as 6-aminopenicillic acid, 7-aminocephalosporanic acid, benzylpenicillin and ampicillin. Inhibited by p-chloromercuribenzoate. Functionally, hydrolyzes N-terminal residues in D-amino acid-containing peptides. This is D-aminopeptidase from Brucella melitensis biotype 1 (strain ATCC 23456 / CCUG 17765 / NCTC 10094 / 16M).